The primary structure comprises 230 residues: uncharacterized protein (230 aa).

The 229-residue stretch at 2-230 (IQLSNVRKSY…ASSGQRSVGE (229 aa)) folds into the ABC transporter domain. Residue 38-45 (GPSGSGKS) participates in ATP binding.

It belongs to the ABC transporter superfamily. In terms of assembly, part of a complex composed of YknX, YknY and YknZ. The complex interacts with YknW.

The protein localises to the cell membrane. Functionally, part of an unusual four-component transporter, which is required for protection against the killing factor SdpC (sporulation-delaying protein). This is an uncharacterized protein from Bacillus subtilis (strain 168).